The following is a 247-amino-acid chain: tRNA pseudouridine synthase A (247 aa).

The Nucleophile role is filled by aspartate 52. Position 113 (tyrosine 113) interacts with substrate.

Belongs to the tRNA pseudouridine synthase TruA family. As to quaternary structure, homodimer.

It carries out the reaction uridine(38/39/40) in tRNA = pseudouridine(38/39/40) in tRNA. In terms of biological role, formation of pseudouridine at positions 38, 39 and 40 in the anticodon stem and loop of transfer RNAs. This is tRNA pseudouridine synthase A from Sinorhizobium fredii (strain NBRC 101917 / NGR234).